Consider the following 367-residue polypeptide: Probable trehalose-phosphate phosphatase 4 (367 aa).

The protein belongs to the trehalose phosphatase family. A divalent metal cation serves as cofactor.

The catalysed reaction is alpha,alpha-trehalose 6-phosphate + H2O = alpha,alpha-trehalose + phosphate. The protein operates within glycan biosynthesis; trehalose biosynthesis. Its function is as follows. Removes the phosphate from trehalose 6-phosphate to produce free trehalose. Trehalose accumulation in plant may improve abiotic stress tolerance. This is Probable trehalose-phosphate phosphatase 4 (TPP4) from Oryza sativa subsp. japonica (Rice).